The chain runs to 73 residues: Methionyl-tRNA formyltransferase (73 aa).

It belongs to the Fmt family.

It carries out the reaction L-methionyl-tRNA(fMet) + (6R)-10-formyltetrahydrofolate = N-formyl-L-methionyl-tRNA(fMet) + (6S)-5,6,7,8-tetrahydrofolate + H(+). Functionally, attaches a formyl group to the free amino group of methionyl-tRNA(fMet). The formyl group appears to play a dual role in the initiator identity of N-formylmethionyl-tRNA by promoting its recognition by IF2 and preventing the misappropriation of this tRNA by the elongation apparatus. The sequence is that of Methionyl-tRNA formyltransferase (fmt) from Rickettsia rickettsii.